The chain runs to 81 residues: Cytochrome c oxidase subunit 7B2, mitochondrial (81 aa).

The N-terminal 25 residues, 1-25 (MMFPLARNALSSLKIRSILQSMARQ), are a transit peptide targeting the mitochondrion. Residues 26 to 33 (SHVKHSPD) are Mitochondrial matrix-facing. A helical transmembrane segment spans residues 34–60 (FHDKYGNAVLASGTAFCVVAWVFTATQ). The Mitochondrial intermembrane portion of the chain corresponds to 61–81 (IGIEWNLSPVGRVTPKEWKHQ).

Belongs to the cytochrome c oxidase VIIb family. Component of the cytochrome c oxidase (complex IV, CIV), a multisubunit enzyme composed of 14 subunits. The complex is composed of a catalytic core of 3 subunits MT-CO1, MT-CO2 and MT-CO3, encoded in the mitochondrial DNA, and 11 supernumerary subunits COX4I, COX5A, COX5B, COX6A, COX6B, COX6C, COX7A, COX7B, COX7C, COX8 and NDUFA4, which are encoded in the nuclear genome. The complex exists as a monomer or a dimer and forms supercomplexes (SCs) in the inner mitochondrial membrane with NADH-ubiquinone oxidoreductase (complex I, CI) and ubiquinol-cytochrome c oxidoreductase (cytochrome b-c1 complex, complex III, CIII), resulting in different assemblies (supercomplex SCI(1)III(2)IV(1) and megacomplex MCI(2)III(2)IV(2)).

It is found in the mitochondrion inner membrane. The protein operates within energy metabolism; oxidative phosphorylation. In terms of biological role, component of the cytochrome c oxidase, the last enzyme in the mitochondrial electron transport chain which drives oxidative phosphorylation. The respiratory chain contains 3 multisubunit complexes succinate dehydrogenase (complex II, CII), ubiquinol-cytochrome c oxidoreductase (cytochrome b-c1 complex, complex III, CIII) and cytochrome c oxidase (complex IV, CIV), that cooperate to transfer electrons derived from NADH and succinate to molecular oxygen, creating an electrochemical gradient over the inner membrane that drives transmembrane transport and the ATP synthase. Cytochrome c oxidase is the component of the respiratory chain that catalyzes the reduction of oxygen to water. Electrons originating from reduced cytochrome c in the intermembrane space (IMS) are transferred via the dinuclear copper A center (CU(A)) of subunit 2 and heme A of subunit 1 to the active site in subunit 1, a binuclear center (BNC) formed by heme A3 and copper B (CU(B)). The BNC reduces molecular oxygen to 2 water molecules using 4 electrons from cytochrome c in the IMS and 4 protons from the mitochondrial matrix. This is Cytochrome c oxidase subunit 7B2, mitochondrial (COX7B2) from Macaca fascicularis (Crab-eating macaque).